We begin with the raw amino-acid sequence, 260 residues long: Neuraminyllactose-binding hemagglutinin (260 aa).

Positions 1–27 are cleaved as a signal peptide; the sequence is MRANNHFKDFAWKKCLLGASVVALLVG. Cys-28 is lipidated: N-palmitoyl cysteine. A lipid anchor (S-diacylglycerol cysteine) is attached at Cys-28. Residues 134 to 139 form an N-acetyl-neuraminyl-alpha(2,3)-lactose binding motif region; the sequence is KRTIQK.

The protein localises to the cell outer membrane. This chain is Neuraminyllactose-binding hemagglutinin (hpaA), found in Helicobacter pylori (Campylobacter pylori).